Consider the following 434-residue polypeptide: MTMKRCKSCGQSLSNEDRISQLPEALLLQILSLLPTKEVVAVSVLAKRWRFLWKMVPSLEFFYYFTNDLERFSYNVSKCLFSHQAPFLQSLHLNMNFGCDPRIMDFEILIGIAFGRQLRKLVLKVYSGDWFKFPTSLYNSETLETLELYHCILIDVPFPVCLKSLRTLNLHEVEFVNDESVVNLLAGCISLENLVIHQTTDLNVKTFTIAVPSLQRLTVIVEYYEEFSVFVVNTPSLKYLKIEGIIVDDRTCIIENTPELVEASIIDVSFKVFESILGSLASVQRLSLKVSLVEIFSLPPISNTFYHLTYLELSTYKPKWWNLLTLMLDTSPNLQVLKIFDFMTSQEQRPWEKWNEPKNVPECLLLHLETFVWTCYEGKLENEIELAKYILRNARRLKKATFSIIEINPDKRVEMVGELKSVVRASNSCQLVFI.

An F-box domain is found at 16–65; the sequence is EDRISQLPEALLLQILSLLPTKEVVAVSVLAKRWRFLWKMVPSLEFFYYF. LRR repeat units lie at residues 69 to 95, 100 to 125, 145 to 172, 173 to 198, 219 to 244, 265 to 290, and 315 to 341; these read LERFSYNVSKCLFSHQAPFLQSLHLNM, DPRIMDFEILIGIAFGRQLRKLVLKV, TLELYHCILIDVPFPVCLKSLRTLNLHE, VEFVNDESVVNLLAGCISLENLVIHQ, VIVEYYEEFSVFVVNTPSLKYLKIEG, IIDVSFKVFESILGSLASVQRLSLKV, and TYKPKWWNLLTLMLDTSPNLQVLKIFD. Residues 353-403 form the FBD domain; the sequence is KWNEPKNVPECLLLHLETFVWTCYEGKLENEIELAKYILRNARRLKKATFS.

This Arabidopsis thaliana (Mouse-ear cress) protein is F-box/FBD/LRR-repeat protein At3g26920.